The chain runs to 140 residues: Putative pre-16S rRNA nuclease (140 aa).

It belongs to the YqgF nuclease family.

It localises to the cytoplasm. Its function is as follows. Could be a nuclease involved in processing of the 5'-end of pre-16S rRNA. The polypeptide is Putative pre-16S rRNA nuclease (Halalkalibacterium halodurans (strain ATCC BAA-125 / DSM 18197 / FERM 7344 / JCM 9153 / C-125) (Bacillus halodurans)).